The primary structure comprises 628 residues: Very-long-chain aldehyde decarbonylase GL1-2 (628 aa).

Transmembrane regions (helical) follow at residues 37-57, 131-151, 191-211, 299-319, and 331-351; these read GAAP…ARGL, GWAI…YWAH, VVIG…VGLV, DFVF…PFVL, and FVLL…WCCS. The Fatty acid hydroxylase domain occupies 137–277; it reads LLHVLVAEPL…MPIFDLLGGT (141 aa).

The protein belongs to the sterol desaturase family. In terms of assembly, homodimer.

It is found in the endoplasmic reticulum membrane. The catalysed reaction is a long-chain fatty aldehyde + 2 NADPH + O2 + H(+) = a long-chain alkane + formate + 2 NADP(+) + H2O. Functionally, aldehyde decarbonylase involved in the conversion of aldehydes to alkanes. Core component of a very-long-chain alkane synthesis complex. The polypeptide is Very-long-chain aldehyde decarbonylase GL1-2 (Oryza sativa subsp. indica (Rice)).